The chain runs to 248 residues: Triosephosphate isomerase (248 aa).

9-11 (NWK) is a substrate binding site. His-94 functions as the Electrophile in the catalytic mechanism. The Proton acceptor role is filled by Glu-166. Residues Gly-172, Ser-212, and 233-234 (GG) each bind substrate.

It belongs to the triosephosphate isomerase family. Homodimer.

The protein resides in the cytoplasm. The catalysed reaction is D-glyceraldehyde 3-phosphate = dihydroxyacetone phosphate. It functions in the pathway carbohydrate biosynthesis; gluconeogenesis. It participates in carbohydrate degradation; glycolysis; D-glyceraldehyde 3-phosphate from glycerone phosphate: step 1/1. Functionally, involved in the gluconeogenesis. Catalyzes stereospecifically the conversion of dihydroxyacetone phosphate (DHAP) to D-glyceraldehyde-3-phosphate (G3P). This Thermoanaerobacter pseudethanolicus (strain ATCC 33223 / 39E) (Clostridium thermohydrosulfuricum) protein is Triosephosphate isomerase.